The chain runs to 176 residues: Ribosome maturation factor RimM (176 aa).

A PRC barrel domain is found at 93–166; sequence EGEYYHADLI…RVVIEMPGEI (74 aa).

Belongs to the RimM family. In terms of assembly, binds ribosomal protein uS19.

The protein localises to the cytoplasm. Functionally, an accessory protein needed during the final step in the assembly of 30S ribosomal subunit, possibly for assembly of the head region. Essential for efficient processing of 16S rRNA. May be needed both before and after RbfA during the maturation of 16S rRNA. It has affinity for free ribosomal 30S subunits but not for 70S ribosomes. The chain is Ribosome maturation factor RimM from Rhodopseudomonas palustris (strain BisA53).